The primary structure comprises 174 residues: Glycine-rich protein 5 (174 aa).

An N-terminal signal peptide occupies residues 1 to 22; that stretch reads MASKSLFLVALLVGSFAFTSFA.

Mostly expressed in immature seed pods, and, to a lower extent, in stems and leaves. Present in phloem and epiderm in leaves, stems, flowers and fruits.

It localises to the vacuole. In terms of biological role, involved in organ growth by promoting cell elongation processes. The polypeptide is Glycine-rich protein 5 (Arabidopsis thaliana (Mouse-ear cress)).